A 22-amino-acid chain; its full sequence is GMASKAGTIAGKIAKTAIKLAL.

A Leucine amide modification is found at Leu22.

In terms of tissue distribution, expressed by the skin glands.

It is found in the secreted. Functionally, has antibacterial and antifungal activity. The sequence is that of Peptide PGLa-B1 from Xenopus borealis (Kenyan clawed frog).